Reading from the N-terminus, the 856-residue chain is Rod cGMP-specific 3',5'-cyclic phosphodiesterase subunit beta (856 aa).

Residue S2 is modified to N-acetylserine. GAF domains are found at residues 71–220 (NMER…TLNL) and 252–429 (DIER…GWSV). The PDEase domain occupies 481–814 (EEDELGILLK…KEWKALADEY (334 aa)). H557 (proton donor) is an active-site residue. 4 residues coordinate a divalent metal cation: H561, H597, D598, and D718. The span at 823 to 833 (EEKQQQEDRTT) shows a compositional bias: basic and acidic residues. The interval 823–842 (EEKQQQEDRTTAKKAGTEIC) is disordered. C853 is lipidated: S-geranylgeranyl cysteine. Positions 854-856 (CIL) are cleaved as a propeptide — removed in mature form.

Belongs to the cyclic nucleotide phosphodiesterase family. Oligomer composed of two catalytic chains (alpha and beta), an inhibitory chain (gamma) and the delta chain. It depends on a divalent metal cation as a cofactor.

The protein resides in the membrane. It is found in the cell projection. It localises to the cilium. Its subcellular location is the photoreceptor outer segment. The catalysed reaction is 3',5'-cyclic GMP + H2O = GMP + H(+). Rod-specific cGMP phosphodiesterase that catalyzes the hydrolysis of 3',5'-cyclic GMP. Necessary for the formation of a functional phosphodiesterase holoenzyme. Involved in retinal circadian rhythm photoentrainment via modulation of UVA and orange light-induced phase-shift of the retina clock. May participate in processes of transmission and amplification of the visual signal. This is Rod cGMP-specific 3',5'-cyclic phosphodiesterase subunit beta from Canis lupus familiaris (Dog).